Here is a 253-residue protein sequence, read N- to C-terminus: Probable transcriptional regulatory protein Tpet_0454 (253 aa).

The protein belongs to the TACO1 family.

The protein resides in the cytoplasm. In Thermotoga petrophila (strain ATCC BAA-488 / DSM 13995 / JCM 10881 / RKU-1), this protein is Probable transcriptional regulatory protein Tpet_0454.